We begin with the raw amino-acid sequence, 321 residues long: tRNA pseudouridine synthase B (321 aa).

The active-site Nucleophile is aspartate 47.

It belongs to the pseudouridine synthase TruB family. Type 1 subfamily.

It carries out the reaction uridine(55) in tRNA = pseudouridine(55) in tRNA. Responsible for synthesis of pseudouridine from uracil-55 in the psi GC loop of transfer RNAs. This chain is tRNA pseudouridine synthase B, found in Shewanella baltica (strain OS223).